Reading from the N-terminus, the 377-residue chain is Succinyl-diaminopimelate desuccinylase (377 aa).

Histidine 68 contributes to the Zn(2+) binding site. Aspartate 70 is an active-site residue. Aspartate 101 lines the Zn(2+) pocket. Glutamate 135 serves as the catalytic Proton acceptor. Residues glutamate 136, glutamate 164, and histidine 350 each coordinate Zn(2+).

Belongs to the peptidase M20A family. DapE subfamily. In terms of assembly, homodimer. It depends on Zn(2+) as a cofactor. Requires Co(2+) as cofactor.

It catalyses the reaction N-succinyl-(2S,6S)-2,6-diaminopimelate + H2O = (2S,6S)-2,6-diaminopimelate + succinate. It functions in the pathway amino-acid biosynthesis; L-lysine biosynthesis via DAP pathway; LL-2,6-diaminopimelate from (S)-tetrahydrodipicolinate (succinylase route): step 3/3. Functionally, catalyzes the hydrolysis of N-succinyl-L,L-diaminopimelic acid (SDAP), forming succinate and LL-2,6-diaminopimelate (DAP), an intermediate involved in the bacterial biosynthesis of lysine and meso-diaminopimelic acid, an essential component of bacterial cell walls. This is Succinyl-diaminopimelate desuccinylase from Vibrio vulnificus (strain CMCP6).